Reading from the N-terminus, the 227-residue chain is GTP:AMP phosphotransferase AK3, mitochondrial (227 aa).

GTP is bound by residues Gly-17, Gly-19, Lys-20, Gly-21, and Thr-22. Lys-20 carries the post-translational modification N6-succinyllysine. Lys-29 carries the N6-acetyllysine; alternate modification. Lys-29 is subject to N6-succinyllysine; alternate. Lys-34 is subject to N6-acetyllysine. Position 37 is a phosphoserine (Ser-37). The interval 37-66 (SSGDLLRQNMLQGTEIAVLAKSFIDQGKLI) is NMP. Ser-38 and Arg-43 together coordinate AMP. N6-succinyllysine is present on Lys-57. 2 positions are modified to N6-acetyllysine; alternate: Lys-64 and Lys-80. Lys-64 and Lys-80 each carry N6-succinyllysine; alternate. Lys-64 lines the AMP pocket. AMP is bound by residues Gly-91, Arg-94, and Gln-98. The interval 127–164 (ARWIHPASGRVYNIEFNPPKTVGIDDLTGEPLIQREDD) is LID. GTP is bound by residues Arg-128, Tyr-138, Asn-139, Arg-161, and Arg-172. 2 positions are modified to N6-acetyllysine; alternate: Lys-174 and Lys-189. An N6-succinyllysine; alternate mark is found at Lys-174 and Lys-189. Thr-201 lines the GTP pocket. The residue at position 203 (Lys-203) is an N6-acetyllysine.

This sequence belongs to the adenylate kinase family. AK3 subfamily. In terms of assembly, monomer.

The protein localises to the mitochondrion matrix. The catalysed reaction is a ribonucleoside 5'-triphosphate + AMP = a ribonucleoside 5'-diphosphate + ADP. The enzyme catalyses GTP + AMP = GDP + ADP. It catalyses the reaction ITP + AMP = IDP + ADP. Its function is as follows. Mitochondrial adenylate kinase with a specific GTP:AMP phosphotransferase activity. Could also use ITP as phosphate donor. Its physiological function is to recycle GTP into GDP which is necessary for the TCA cycle in the mitochondrial matrix. The protein is GTP:AMP phosphotransferase AK3, mitochondrial of Rattus norvegicus (Rat).